The chain runs to 192 residues: Ion-translocating oxidoreductase complex subunit A (192 aa).

A run of 6 helical transmembrane segments spans residues leucine 5 to leucine 25, isoleucine 39 to valine 59, leucine 65 to valine 85, alanine 102 to leucine 122, alanine 134 to methionine 154, and alanine 171 to valine 191.

Belongs to the NqrDE/RnfAE family. As to quaternary structure, the complex is composed of six subunits: RnfA, RnfB, RnfC, RnfD, RnfE and RnfG.

The protein resides in the cell inner membrane. Its function is as follows. Part of a membrane-bound complex that couples electron transfer with translocation of ions across the membrane. The protein is Ion-translocating oxidoreductase complex subunit A of Shewanella baltica (strain OS185).